The primary structure comprises 116 residues: MNDRITLAQAHCQPREKKEHKLGQARLAELLTQVPGWELSNNGHALTRTFQFDNYYRTLAFVNALAFIAHCEDHHPDMNVHYGRAVVCFSTHKIGGISEIDFICAAKTSALYEQGI.

Belongs to the pterin-4-alpha-carbinolamine dehydratase family.

It carries out the reaction (4aS,6R)-4a-hydroxy-L-erythro-5,6,7,8-tetrahydrobiopterin = (6R)-L-erythro-6,7-dihydrobiopterin + H2O. The polypeptide is Putative pterin-4-alpha-carbinolamine dehydratase (Xylella fastidiosa (strain M23)).